Consider the following 893-residue polypeptide: Eukaryotic translation initiation factor 3 subunit A (893 aa).

The 184-residue stretch at 319-502 (LQRMAAHVLL…NSIFFGTDLT (184 aa)) folds into the PCI domain. Coiled coils occupy residues 576 to 707 (QKII…RAKR) and 784 to 881 (EIAL…REVA). 2 disordered regions span residues 592 to 634 (AREL…EIQA) and 837 to 893 (AEAR…RRRQ). The span at 837-881 (AEARRLEREAEDEKRRQQYEKQRAKEEEAERKIQEDRDRLAREVA) shows a compositional bias: basic and acidic residues.

It belongs to the eIF-3 subunit A family. As to quaternary structure, component of the eukaryotic translation initiation factor 3 (eIF-3) complex. The eIF-3 complex interacts with pix.

Its subcellular location is the cytoplasm. In terms of biological role, RNA-binding component of the eukaryotic translation initiation factor 3 (eIF-3) complex, which is involved in protein synthesis of a specialized repertoire of mRNAs and, together with other initiation factors, stimulates binding of mRNA and methionyl-tRNAi to the 40S ribosome. The eIF-3 complex specifically targets and initiates translation of a subset of mRNAs involved in cell proliferation. The chain is Eukaryotic translation initiation factor 3 subunit A from Drosophila grimshawi (Hawaiian fruit fly).